Consider the following 125-residue polypeptide: Ribonuclease P protein component (125 aa).

It belongs to the RnpA family. Consists of a catalytic RNA component (M1 or rnpB) and a protein subunit.

It carries out the reaction Endonucleolytic cleavage of RNA, removing 5'-extranucleotides from tRNA precursor.. Functionally, RNaseP catalyzes the removal of the 5'-leader sequence from pre-tRNA to produce the mature 5'-terminus. It can also cleave other RNA substrates such as 4.5S RNA. The protein component plays an auxiliary but essential role in vivo by binding to the 5'-leader sequence and broadening the substrate specificity of the ribozyme. The chain is Ribonuclease P protein component from Clostridium botulinum (strain Alaska E43 / Type E3).